The following is a 127-amino-acid chain: uncharacterized protein (127 aa).

This is an uncharacterized protein from Thermoproteus tenax (TTV1).